Consider the following 147-residue polypeptide: TRAF-interacting protein with FHA domain-containing protein B (147 aa).

The FHA domain occupies 36–108 (LLVGRGQNTH…LGTINRISFS (73 aa)).

As to quaternary structure, interacts with TIFA. In terms of tissue distribution, expressed at high levels in spleen and at moderate levels in lung, thymus, and small intestine.

In terms of biological role, inhibits TIFA-mediated TRAF6 activation possibly by inducing a conformational change in TIFA. In Mus musculus (Mouse), this protein is TRAF-interacting protein with FHA domain-containing protein B.